The chain runs to 258 residues: Ribosome maturation factor RimP (258 aa).

2 disordered regions span residues 48–88 and 212–258; these read PQRP…PTSA and IFKK…AEND. Residues 215–224 are compositionally biased toward basic residues; sequence KPQKPGKKPG.

It belongs to the RimP family.

The protein resides in the cytoplasm. In terms of biological role, required for maturation of 30S ribosomal subunits. In Desulfovibrio desulfuricans (strain ATCC 27774 / DSM 6949 / MB), this protein is Ribosome maturation factor RimP.